We begin with the raw amino-acid sequence, 84 residues long: Large ribosomal subunit protein bL27 (84 aa).

The disordered stretch occupies residues 1–27; that stretch reads MAHKKGQGASRNGRDSKSKRLGVKVGA.

This sequence belongs to the bacterial ribosomal protein bL27 family.

In Chlamydia pneumoniae (Chlamydophila pneumoniae), this protein is Large ribosomal subunit protein bL27.